A 309-amino-acid polypeptide reads, in one-letter code: ATP-dependent Clp protease proteolytic subunit 3, chloroplastic (309 aa).

Residues 1–70 (MEMSLRLASS…WDVSSFSIDS (70 aa)) constitute a chloroplast transit peptide. At V71 the chain carries N-acetylvaline. S164 serves as the catalytic Nucleophile. The active site involves H189. T194 is modified (phosphothreonine). Residues 290–309 (DNTNLPSERSMTQNGYAAIE) are disordered. Over residues 292-309 (TNLPSERSMTQNGYAAIE) the composition is skewed to polar residues.

The protein belongs to the peptidase S14 family. In terms of assembly, component of the chloroplastic Clp protease core complex which consist of at least 16 proteins: CLPP4 (3 copies), CLPP5 (3 copies), CLPR4 (2 copies), ClpP1 (1 copy), CLPP6 (1 copy), CLPR2 (1 copy), CLPT1 (1 copy), CLPT2 (1 copy) and 3 copies of CLPP3 and/or CLPR1 and/or CLPR3. The core complex is organized in two heptameric rings, one containing CLPP3,4,5,6 in a 1:2:3:1 ratio and the other CLPP1 and CLPR1,2,3,4 in a 3:1:1:1:1 ratio. Interacts with CHIP. Ubiquitinated in vitro by CHIP. In terms of tissue distribution, mostly expressed in leaves. Also detected in stems, and to a lower extent, in roots (at protein level).

It localises to the plastid. The protein resides in the chloroplast stroma. It carries out the reaction Hydrolysis of proteins to small peptides in the presence of ATP and magnesium. alpha-casein is the usual test substrate. In the absence of ATP, only oligopeptides shorter than five residues are hydrolyzed (such as succinyl-Leu-Tyr-|-NHMec, and Leu-Tyr-Leu-|-Tyr-Trp, in which cleavage of the -Tyr-|-Leu- and -Tyr-|-Trp bonds also occurs).. Its function is as follows. Cleaves peptides in various proteins in a process that requires ATP hydrolysis. Has a chymotrypsin-like activity. Plays a major role in the degradation of misfolded proteins. In the absence of CLPP3, modified ClpPR core(s) could be formed, albeit at strongly reduced levels. This is ATP-dependent Clp protease proteolytic subunit 3, chloroplastic from Arabidopsis thaliana (Mouse-ear cress).